A 36-amino-acid chain; its full sequence is Photosystem I reaction center subunit VIII (36 aa).

Residues 4–24 traverse the membrane as a helical segment; it reads FSLPSILVPLVGLVLPAIAMA.

It belongs to the PsaI family.

Its subcellular location is the plastid. It is found in the chloroplast thylakoid membrane. Its function is as follows. May help in the organization of the PsaL subunit. This Piper cenocladum (Ant piper) protein is Photosystem I reaction center subunit VIII.